The chain runs to 348 residues: D-alanine--D-alanine ligase (348 aa).

One can recognise an ATP-grasp domain in the interval K132 to T334. L162–E217 contributes to the ATP binding site. 3 residues coordinate Mg(2+): D288, E301, and N303.

It belongs to the D-alanine--D-alanine ligase family. It depends on Mg(2+) as a cofactor. Mn(2+) serves as cofactor.

The protein localises to the cytoplasm. It catalyses the reaction 2 D-alanine + ATP = D-alanyl-D-alanine + ADP + phosphate + H(+). It participates in cell wall biogenesis; peptidoglycan biosynthesis. In terms of biological role, cell wall formation. The polypeptide is D-alanine--D-alanine ligase (Streptococcus pyogenes serotype M4 (strain MGAS10750)).